We begin with the raw amino-acid sequence, 284 residues long: Trimeric intracellular cation channel type B (284 aa).

Residues 1–15 lie on the Lumenal side of the membrane; it reads MESFSELSLQFSQLS. Residues 16–32 traverse the membrane as a helical segment; it reads MFPFFETAHYLTSVMSA. The Cytoplasmic segment spans residues 33–44; it reads REQAGAVDVASR. A helical membrane pass occupies residues 45-68; sequence SPLASWFSSMLYCFGGGILSSILL. The Lumenal segment spans residues 69 to 79; the sequence is AEPPVGILSNT. The helical transmembrane segment at 80–99 threads the bilayer; that stretch reads TSIILASAVWYMVYYFPYDL. At 100-102 the chain is on the cytoplasmic side; the sequence is FYN. The chain crosses the membrane as a helical span at residues 103–121; sequence CFFFLPIRLILAGMKEVTR. A 1,2-diacyl-sn-glycero-3-phospho-(1D-myo-inositol-4,5-bisphosphate) contacts are provided by lysine 117 and arginine 121. The Lumenal segment spans residues 122–139; the sequence is TWKILSGVAHAHSHYKDA. A helical transmembrane segment spans residues 140-157; sequence MLVMITIGWARGAGGGLI. The Cytoplasmic portion of the chain corresponds to 158 to 178; sequence SNFEQLVRGVWKPESNEFLKM. Residues 179 to 196 traverse the membrane as a helical segment; sequence SYPVKVTLIGAVLFTLQH. At 197–204 the chain is on the lumenal side; it reads GQYLPISR. The chain crosses the membrane as a helical span at residues 205–225; the sequence is HNLMFIYTLFLILIKVTMMLT. Topologically, residues 226 to 284 are cytoplasmic; that stretch reads RSTASPFLPLETSLQHILFSRQQIPAEVRESPSSSGDKGKPSKKTLDKDSGEQDNKKDN. Positions 250-284 are disordered; the sequence is PAEVRESPSSSGDKGKPSKKTLDKDSGEQDNKKDN. The segment covering 262–284 has biased composition (basic and acidic residues); sequence DKGKPSKKTLDKDSGEQDNKKDN.

It belongs to the TMEM38 family. As to quaternary structure, homotrimer; conformation seems to be controled by binding to diacylglycerol (DAG).

The protein resides in the endoplasmic reticulum membrane. It carries out the reaction K(+)(in) = K(+)(out). With respect to regulation, channel activity is activated by increased cytosolic Ca(2+) levels and blocked by luminal high Ca(2+) levels. In terms of biological role, intracellular monovalent cation channel required for maintenance of rapid intracellular calcium release. Acts as a potassium counter-ion channel that functions in synchronization with calcium release from intracellular stores. Activated by increased cytosolic Ca(2+) levels. The polypeptide is Trimeric intracellular cation channel type B (tmem38b) (Xenopus tropicalis (Western clawed frog)).